We begin with the raw amino-acid sequence, 499 residues long: Neuronal acetylcholine receptor subunit alpha-3 (499 aa).

A signal peptide spans 1–25; the sequence is MGVVLLPPPLSMLMLVLMLLPAASA. Residues 26 to 244 are Extracellular-facing; that stretch reads SEAEHRLFQY…PLFYTINLII (219 aa). 2 N-linked (GlcNAc...) asparagine glycosylation sites follow: Asn49 and Asn166. 2 cysteine pairs are disulfide-bonded: Cys153/Cys167 and Cys217/Cys218. A helical transmembrane segment spans residues 245–260; sequence PCLLISFLTVLVFYLP. At 261–262 the chain is on the cytoplasmic side; sequence SD. The helical transmembrane segment at 263 to 279 threads the bilayer; the sequence is CGEKVTLCISVLLSLTV. Glu265 provides a ligand contact to Na(+). Residues 280-301 are Extracellular-facing; that stretch reads FLLVITETIPSTSLVIPLIGEY. A helical membrane pass occupies residues 302-320; the sequence is LLFTMIFVTLSIVITVFVL. The Cytoplasmic segment spans residues 321–468; that stretch reads NVHYRTPTTH…QDDWKYVAMV (148 aa). Ser407 and Ser410 each carry phosphoserine. Residues 469–487 form a helical membrane-spanning segment; that stretch reads IDRIFLWVFILVCILGTAG. Over 488-499 the chain is Extracellular; the sequence is LFLQPLMARDDT.

This sequence belongs to the ligand-gated ion channel (TC 1.A.9) family. Acetylcholine receptor (TC 1.A.9.1) subfamily. Alpha-3/CHRNA3 sub-subfamily. In terms of assembly, neuronal AChR is composed of two different types of subunits: alpha and beta. CHRNA3/Alpha-3 subunit can be combined to CHRNB2/beta-2 or CHRNB4/beta-4 to give rise to functional receptors. Part of a complex composed of STUB1/CHIP, VCP/p97, CHRNA3, and UBXN2A that modulates the ubiquitination and endoplasmic reticulum-associated degradation (ERAD) of CHRNA3. Within the complex UBXN2A acts as a scaffold protein required for the interaction of CHRNA3 with VCP/p97, this interaction also inhibits CHRNA3 ubiquitination by STUB1/CHIP and subsequently ERAD. Interacts with UBXN2A (via SEP domain), the interaction is required for the interaction of CHRNA3 in the STUB1:VCP:UBXN2A complex. Interacts with RIC3; which is required for proper folding and assembly. Ubiquitinated; by STUB1/CHIP and thereafter degraded by the 26S proteosome complex. Expressed in neurons. Expressed in umbrella cells of urothelium (at protein level).

It is found in the synaptic cell membrane. It localises to the cell membrane. The protein localises to the endoplasmic reticulum. The protein resides in the golgi apparatus. The catalysed reaction is Ca(2+)(in) = Ca(2+)(out). The enzyme catalyses K(+)(in) = K(+)(out). It carries out the reaction Na(+)(in) = Na(+)(out). With respect to regulation, activated by a myriad of ligands such as acetylcholine, cytisine, nicotine, choline and epibatidine. The heteropentamer CHRNA3:CHRNB2 activity is blocked by alpha-conotoxins ImI, ImII, PnIA, GID and MII. The heteropentamer CHRNA3:CHRNB4 activity is blocked by the alpha-conotoxin ImI and AuIB. In terms of biological role, component of neuronal acetylcholine receptors (nAChRs) that function as pentameric, ligand-gated cation channels with high calcium permeability among other activities. nAChRs are excitatory neurotrasnmitter receptors formed by a collection of nAChR subunits known to mediate synaptic transmission in the nervous system and the neuromuscular junction. Each nAchR subunit confers differential attributes to channel properties, including activation, deactivation and desensitization kinetics, pH sensitivity, cation permeability, and binding to allosteric modulators. CHRNA3 forms heteropentameric neuronal acetylcholine receptors with CHRNB2 and CHRNB4. CHRNA3:CHRNB4 being predominant in neurons of the autonomic ganglia, it is known as ganglionic nicotinic receptor. CHRNA3:CHRNB4 also plays an important role in the habenulo-interpeduncular tract, modulating the mesolimbic dopamine system and affecting reward circuits and addiction. Hypothalamic CHRNA3:CHRNB4 nAChR activation by nicotine leads to activation of POMC neurons and a decrease in food intake. Also expressed in the urothelium where it modulates reflex bladder activity by increasing intracellular calcium through extracellular influx and basal ATP release. In Rattus norvegicus (Rat), this protein is Neuronal acetylcholine receptor subunit alpha-3 (Chrna3).